Consider the following 349-residue polypeptide: Anthranilate phosphoribosyltransferase (349 aa).

5-phospho-alpha-D-ribose 1-diphosphate contacts are provided by residues Gly82, 85-86 (GD), Thr90, 92-95 (NVST), 110-118 (KHGNRSVSS), and Gly122. Gly82 contacts anthranilate. A Mg(2+)-binding site is contributed by Ser94. Asn113 contacts anthranilate. Position 168 (Arg168) interacts with anthranilate. The Mg(2+) site is built by Asp232 and Glu233.

The protein belongs to the anthranilate phosphoribosyltransferase family. Homodimer. Mg(2+) is required as a cofactor.

It catalyses the reaction N-(5-phospho-beta-D-ribosyl)anthranilate + diphosphate = 5-phospho-alpha-D-ribose 1-diphosphate + anthranilate. The protein operates within amino-acid biosynthesis; L-tryptophan biosynthesis; L-tryptophan from chorismate: step 2/5. In terms of biological role, catalyzes the transfer of the phosphoribosyl group of 5-phosphorylribose-1-pyrophosphate (PRPP) to anthranilate to yield N-(5'-phosphoribosyl)-anthranilate (PRA). This chain is Anthranilate phosphoribosyltransferase, found in Methanosphaera stadtmanae (strain ATCC 43021 / DSM 3091 / JCM 11832 / MCB-3).